Consider the following 141-residue polypeptide: Hemoglobin subunit alpha-A (141 aa).

The region spanning 1–141 (VLSAADKTNV…VSTVLTAKYR (141 aa)) is the Globin domain. His58 is a binding site for O2. His87 is a binding site for heme b.

It belongs to the globin family. As to quaternary structure, heterotetramer of two alpha chains and two beta chains. As to expression, red blood cells.

Its function is as follows. Involved in oxygen transport from the lung to the various peripheral tissues. In Eudynamys scolopaceus (Western koel), this protein is Hemoglobin subunit alpha-A (HBAA).